The chain runs to 165 residues: Probable cell wall protein PGA15 (165 aa).

A signal peptide spans 1-16 (MKFIIILFTLISIVTA). The GPI-anchor amidated serine moiety is linked to residue Ser-143. The propeptide at 144–165 (GAANYLTSFSIGTFFVFVLGLI) is removed in mature form.

Belongs to the IHD1 family. Post-translationally, the GPI-anchor is attached to the protein in the endoplasmic reticulum and serves to target the protein to the cell surface. There, the glucosamine-inositol phospholipid moiety is cleaved off and the GPI-modified mannoprotein is covalently attached via its lipidless GPI glycan remnant to the 1,6-beta-glucan of the outer cell wall layer.

Its subcellular location is the secreted. It localises to the cell wall. The protein localises to the membrane. In terms of biological role, probable GPI-anchored cell wall protein that may be involved in cell wall organization, hyphal growth, as well as in virulence. This is Probable cell wall protein PGA15 (PGA15) from Candida albicans (strain SC5314 / ATCC MYA-2876) (Yeast).